Here is a 326-residue protein sequence, read N- to C-terminus: Biotin synthase (326 aa).

The 228-residue stretch at 51-278 folds into the Radical SAM core domain; the sequence is NEVQRSTLLS…TSYVRLSAGR (228 aa). [4Fe-4S] cluster is bound by residues Cys-66, Cys-70, and Cys-73. Positions 110, 141, 201, and 273 each coordinate [2Fe-2S] cluster.

Belongs to the radical SAM superfamily. Biotin synthase family. As to quaternary structure, homodimer. The cofactor is [4Fe-4S] cluster. [2Fe-2S] cluster is required as a cofactor.

It carries out the reaction (4R,5S)-dethiobiotin + (sulfur carrier)-SH + 2 reduced [2Fe-2S]-[ferredoxin] + 2 S-adenosyl-L-methionine = (sulfur carrier)-H + biotin + 2 5'-deoxyadenosine + 2 L-methionine + 2 oxidized [2Fe-2S]-[ferredoxin]. Its pathway is cofactor biosynthesis; biotin biosynthesis; biotin from 7,8-diaminononanoate: step 2/2. In terms of biological role, catalyzes the conversion of dethiobiotin (DTB) to biotin by the insertion of a sulfur atom into dethiobiotin via a radical-based mechanism. This Azoarcus sp. (strain BH72) protein is Biotin synthase.